The sequence spans 173 residues: Monothiol glutaredoxin-S14, chloroplastic (173 aa).

The N-terminal 63 residues, 1–63 (MALRSVKTPT…KLKPTKFRCS (63 aa)), are a transit peptide targeting the chloroplast. The Glutaredoxin domain maps to 72-173 (KDTLEKLVNS…QEEVEKAMCS (102 aa)). K89 is a binding site for glutathione. 2 residues coordinate [2Fe-2S] cluster: C97 and F99. Residue C97 is modified to S-glutathionyl cysteine. Residues 97–100 (CGFS) form a required for CAX1 activation region. Residues R126 and K130 each contribute to the glutathione site. The interval 133–137 (SNWPT) is required for CAX1 activation. Glutathione contacts are provided by residues F138 and 151–152 (CD).

Belongs to the glutaredoxin family. CGFS subfamily. [2Fe-2S]-bridged holo-homodimer. Interacts with N-terminal part of CAX1 in yeast. Interacts in vitro with SUFE1, BOLA1, BOLA2 and BOLA4. Interacts in vivo only with SUFE1, BOLA1 and BOLA4. Interacts with SBP1. In terms of tissue distribution, highly expressed in leaves, at intermediate levels in stems and at lower levels in roots and flowers.

It localises to the plastid. The protein localises to the chloroplast. May only reduce GSH-thiol disulfides, but not protein disulfides (Potential). Probably involved in the regulation of the redox state of the BOLA proteins (Potential). May act as Fe-S cluster donors to Fe-S cluster-requiring proteins. May protect cells against protein oxidative damage. May regulate CAX cation transporters. The GRXS14-BOLA1 heterodimer binds a labile, oxygen sensitive Fe-S cluster. In Arabidopsis thaliana (Mouse-ear cress), this protein is Monothiol glutaredoxin-S14, chloroplastic.